We begin with the raw amino-acid sequence, 481 residues long: Cobyric acid synthase (481 aa).

In terms of domain architecture, GATase cobBQ-type spans 244–431 (VLRVVIPVLP…LHGLFDAPEA (188 aa)). The active-site Nucleophile is the C325. Residue H423 is part of the active site.

Belongs to the CobB/CobQ family. CobQ subfamily.

It functions in the pathway cofactor biosynthesis; adenosylcobalamin biosynthesis. Functionally, catalyzes amidations at positions B, D, E, and G on adenosylcobyrinic A,C-diamide. NH(2) groups are provided by glutamine, and one molecule of ATP is hydrogenolyzed for each amidation. The chain is Cobyric acid synthase from Ralstonia nicotianae (strain ATCC BAA-1114 / GMI1000) (Ralstonia solanacearum).